The sequence spans 344 residues: Uroporphyrinogen decarboxylase (344 aa).

Residues 27 to 31 (RQAGR), Phe46, Asp76, Tyr151, Ser206, and His319 contribute to the substrate site.

Belongs to the uroporphyrinogen decarboxylase family. As to quaternary structure, homodimer.

The protein resides in the cytoplasm. It catalyses the reaction uroporphyrinogen III + 4 H(+) = coproporphyrinogen III + 4 CO2. The protein operates within porphyrin-containing compound metabolism; protoporphyrin-IX biosynthesis; coproporphyrinogen-III from 5-aminolevulinate: step 4/4. In terms of biological role, catalyzes the decarboxylation of four acetate groups of uroporphyrinogen-III to yield coproporphyrinogen-III. In Halalkalibacterium halodurans (strain ATCC BAA-125 / DSM 18197 / FERM 7344 / JCM 9153 / C-125) (Bacillus halodurans), this protein is Uroporphyrinogen decarboxylase.